We begin with the raw amino-acid sequence, 172 residues long: Biogenesis of lysosome-related organelles complex 1 subunit 6 (172 aa).

Positions 1–10 (MSVPEPPPPD) are enriched in pro residues. Disordered regions lie at residues 1-37 (MSVPEPPPPDGVLTGPSDSLEAGEPTPGLSDTSPDEG) and 141-172 (QKRQREELEREQQREKEFEREKQLTAKPAKRT). A coiled-coil region spans residues 63 to 167 (DLQRSKRALQ…FEREKQLTAK (105 aa)). Positions 143 to 164 (RQREELEREQQREKEFEREKQL) are enriched in basic and acidic residues.

It belongs to the BLOC1S6 family. In terms of assembly, octamer composed of one copy each BLOC1S1, BLOC1S2, BLOC1S3, BLOC1S4, BLOC1S5, BLOC1S6, DTNBP1/BLOC1S7 and SNAPIN/BLOC1S8. Interacts with SNAP47. Homodimer. Component of the biogenesis of lysosome-related organelles complex 1 (BLOC-1) composed of BLOC1S1, BLOC1S2, BLOC1S3, BLOC1S4, BLOC1S5, BLOC1S6, DTNBP1/BLOC1S7 and SNAPIN/BLOC1S8. Interacts with BLOC1S4, BLOC1S5, DTNBP1/BLOC1S7, F-actin, SNAP25 isoform 1 and STX12. Post-translationally, phosphorylated. Expressed in liver, kidney and spleen (at protein level). Ubiquitously expressed, with the highest expression levels observed in brain, heart, liver and kidney.

Its subcellular location is the cytoplasm. It is found in the membrane. Functionally, component of the BLOC-1 complex, a complex that is required for normal biogenesis of lysosome-related organelles (LRO), such as platelet dense granules and melanosomes. In concert with the AP-3 complex, the BLOC-1 complex is required to target membrane protein cargos into vesicles assembled at cell bodies for delivery into neurites and nerve terminals. The BLOC-1 complex, in association with SNARE proteins, is also proposed to be involved in neurite extension. May play a role in intracellular vesicle trafficking, particularly in the vesicle-docking and fusion process. This chain is Biogenesis of lysosome-related organelles complex 1 subunit 6 (Bloc1s6), found in Mus musculus (Mouse).